Reading from the N-terminus, the 635-residue chain is Probable clathrin assembly protein At4g32285 (635 aa).

The region spanning 23–159 (VASNMAPDLE…ELALFERRGR (137 aa)) is the ENTH domain. The segment at 157-208 (RGRNGGGSSSSHQSNGDDGYNRSRDDFRSPPPRTYDYETGNGFGMPKRSRSF) is disordered. Low complexity predominate over residues 165-174 (SSSHQSNGDD). Residues 175 to 184 (GYNRSRDDFR) show a composition bias toward basic and acidic residues. S207 carries the post-translational modification Phosphoserine. Phosphothreonine is present on T224. Over residues 357-369 (AKRAKSPERKEIE) the composition is skewed to basic and acidic residues. The segment at 357-412 (AKRAKSPERKEIEAPPAPAPPVEEPVDMNEIKALPPPENHTPPPPPAPEPKPQQPQ) is disordered. Residues 390–409 (LPPPENHTPPPPPAPEPKPQ) show a composition bias toward pro residues.

The protein localises to the membrane. It localises to the clathrin-coated pit. Its subcellular location is the golgi apparatus. The protein resides in the cytoplasmic vesicle. It is found in the clathrin-coated vesicle. The sequence is that of Probable clathrin assembly protein At4g32285 from Arabidopsis thaliana (Mouse-ear cress).